A 215-amino-acid chain; its full sequence is Riboflavin synthase (215 aa).

Lumazine-binding repeat units lie at residues 1 to 96 and 97 to 193; these read MFTG…FGGH and FVSG…YRFL. Residues 4-6, 47-49, 61-66, 100-102, K135, 144-146, and 158-163 each bind 2,4-dihydroxypteridine; these read GIV, CLT, DVMPET, GHV, SST, and SVIPHT.

Homotrimer.

The catalysed reaction is 2 6,7-dimethyl-8-(1-D-ribityl)lumazine + H(+) = 5-amino-6-(D-ribitylamino)uracil + riboflavin. It participates in cofactor biosynthesis; riboflavin biosynthesis; riboflavin from 2-hydroxy-3-oxobutyl phosphate and 5-amino-6-(D-ribitylamino)uracil: step 2/2. In terms of biological role, catalyzes the dismutation of two molecules of 6,7-dimethyl-8-ribityllumazine, resulting in the formation of riboflavin and 5-amino-6-(D-ribitylamino)uracil. The protein is Riboflavin synthase (ribE) of Bacillus amyloliquefaciens (Bacillus velezensis).